The primary structure comprises 261 residues: Adenosylcobinamide-GDP ribazoletransferase (261 aa).

Transmembrane regions (helical) follow at residues 31–51 (YAIC…FLTF), 59–79 (LGDI…SGGI), 125–145 (FGMV…FFVV), 183–203 (VIYL…LTVV), and 240–260 (LMAG…TGHW).

Belongs to the CobS family. Mg(2+) serves as cofactor.

Its subcellular location is the cell membrane. The catalysed reaction is alpha-ribazole + adenosylcob(III)inamide-GDP = adenosylcob(III)alamin + GMP + H(+). The enzyme catalyses alpha-ribazole 5'-phosphate + adenosylcob(III)inamide-GDP = adenosylcob(III)alamin 5'-phosphate + GMP + H(+). Its pathway is cofactor biosynthesis; adenosylcobalamin biosynthesis; adenosylcobalamin from cob(II)yrinate a,c-diamide: step 7/7. Functionally, joins adenosylcobinamide-GDP and alpha-ribazole to generate adenosylcobalamin (Ado-cobalamin). Also synthesizes adenosylcobalamin 5'-phosphate from adenosylcobinamide-GDP and alpha-ribazole 5'-phosphate. The sequence is that of Adenosylcobinamide-GDP ribazoletransferase from Lachnoclostridium phytofermentans (strain ATCC 700394 / DSM 18823 / ISDg) (Clostridium phytofermentans).